Here is a 246-residue protein sequence, read N- to C-terminus: MTNNAAAPLYSLRGLPLIGWRDMSHALNYLFADGQLKQGTLVAINAEKLLTAEDNPEVRALIAAAEFKYADGISVVRSIRKKFPQAQVSRVAGADLWEALMARAGKEGTPVFLVGGKPEVLAQTEAKLRTQWNVNIVGSQDGYFTPEQRQALFARIHASGAKIVTVAMGSPKQELLMRDCREVHPHALYMGVGGTYDVFTGHVKRAPKIWQNLGLEWLYRLLSQPKRITRQMRLLRYLRWHYTGDL.

Belongs to the glycosyltransferase 26 family.

It catalyses the reaction UDP-N-acetyl-alpha-D-mannosaminouronate + N-acetyl-alpha-D-glucosaminyl-di-trans,octa-cis-undecaprenyl diphosphate = beta-D-ManNAcA-(1-&gt;4)-alpha-D-GlcNAc-di-trans,octa-cis-undecaprenyl diphosphate + UDP + H(+). It functions in the pathway bacterial outer membrane biogenesis; enterobacterial common antigen biosynthesis. Functionally, catalyzes the synthesis of Und-PP-GlcNAc-ManNAcA (Lipid II), the second lipid-linked intermediate involved in enterobacterial common antigen (ECA) synthesis. This chain is UDP-N-acetyl-D-mannosaminuronic acid transferase, found in Salmonella choleraesuis (strain SC-B67).